Reading from the N-terminus, the 283-residue chain is Thymidylate synthase (283 aa).

A dUMP-binding site is contributed by Arg-22. Cys-160 functions as the Nucleophile in the catalytic mechanism. Residues 180 to 183 (RSCD), Asn-191, and 221 to 223 (HIY) each bind dUMP. Position 183 (Asp-183) interacts with (6R)-5,10-methylene-5,6,7,8-tetrahydrofolate. Position 282 (Ser-282) interacts with (6R)-5,10-methylene-5,6,7,8-tetrahydrofolate.

Belongs to the thymidylate synthase family. Bacterial-type ThyA subfamily. Homodimer.

It is found in the cytoplasm. The catalysed reaction is dUMP + (6R)-5,10-methylene-5,6,7,8-tetrahydrofolate = 7,8-dihydrofolate + dTMP. Its pathway is pyrimidine metabolism; dTTP biosynthesis. Functionally, catalyzes the reductive methylation of 2'-deoxyuridine-5'-monophosphate (dUMP) to 2'-deoxythymidine-5'-monophosphate (dTMP) while utilizing 5,10-methylenetetrahydrofolate (mTHF) as the methyl donor and reductant in the reaction, yielding dihydrofolate (DHF) as a by-product. This enzymatic reaction provides an intracellular de novo source of dTMP, an essential precursor for DNA biosynthesis. The sequence is that of Thymidylate synthase from Pasteurella multocida (strain Pm70).